A 350-amino-acid chain; its full sequence is Phospho-N-acetylmuramoyl-pentapeptide-transferase (350 aa).

Helical transmembrane passes span 28-48, 70-90, 100-120, 136-156, 164-184, 195-215, 221-241, 249-269, and 328-348; these read LPLL…IPLL, GTPT…GSLI, LLSL…DDWS, LLLQ…QGWI, FGLE…VVLA, LDGL…LQLM, GDPA…GFLV, AFMG…VALL, and QSVV…GLVL.

The protein belongs to the glycosyltransferase 4 family. MraY subfamily. Requires Mg(2+) as cofactor.

Its subcellular location is the cell inner membrane. It carries out the reaction UDP-N-acetyl-alpha-D-muramoyl-L-alanyl-gamma-D-glutamyl-meso-2,6-diaminopimeloyl-D-alanyl-D-alanine + di-trans,octa-cis-undecaprenyl phosphate = di-trans,octa-cis-undecaprenyl diphospho-N-acetyl-alpha-D-muramoyl-L-alanyl-D-glutamyl-meso-2,6-diaminopimeloyl-D-alanyl-D-alanine + UMP. The protein operates within cell wall biogenesis; peptidoglycan biosynthesis. Its function is as follows. Catalyzes the initial step of the lipid cycle reactions in the biosynthesis of the cell wall peptidoglycan: transfers peptidoglycan precursor phospho-MurNAc-pentapeptide from UDP-MurNAc-pentapeptide onto the lipid carrier undecaprenyl phosphate, yielding undecaprenyl-pyrophosphoryl-MurNAc-pentapeptide, known as lipid I. In Synechococcus sp. (strain CC9605), this protein is Phospho-N-acetylmuramoyl-pentapeptide-transferase.